Reading from the N-terminus, the 100-residue chain is Urease subunit gamma (100 aa).

This sequence belongs to the urease gamma subunit family. In terms of assembly, heterotrimer of UreA (gamma), UreB (beta) and UreC (alpha) subunits. Three heterotrimers associate to form the active enzyme.

The protein localises to the cytoplasm. It carries out the reaction urea + 2 H2O + H(+) = hydrogencarbonate + 2 NH4(+). It participates in nitrogen metabolism; urea degradation; CO(2) and NH(3) from urea (urease route): step 1/1. The chain is Urease subunit gamma from Haemophilus influenzae (strain PittEE).